The sequence spans 363 residues: Aminomethyltransferase (363 aa).

Belongs to the GcvT family. In terms of assembly, the glycine cleavage system is composed of four proteins: P, T, L and H.

The catalysed reaction is N(6)-[(R)-S(8)-aminomethyldihydrolipoyl]-L-lysyl-[protein] + (6S)-5,6,7,8-tetrahydrofolate = N(6)-[(R)-dihydrolipoyl]-L-lysyl-[protein] + (6R)-5,10-methylene-5,6,7,8-tetrahydrofolate + NH4(+). Its function is as follows. The glycine cleavage system catalyzes the degradation of glycine. In Staphylococcus aureus (strain bovine RF122 / ET3-1), this protein is Aminomethyltransferase.